Here is a 123-residue protein sequence, read N- to C-terminus: Small ribosomal subunit protein uS12 (123 aa).

The interval 1–32 (MPTINQLIRKPREAQKARDKAPALQSSPQKRG) is disordered. Residues 10 to 21 (KPREAQKARDKA) show a composition bias toward basic and acidic residues. Asp89 bears the 3-methylthioaspartic acid mark.

This sequence belongs to the universal ribosomal protein uS12 family. As to quaternary structure, part of the 30S ribosomal subunit. Contacts proteins S8 and S17. May interact with IF1 in the 30S initiation complex.

Its function is as follows. With S4 and S5 plays an important role in translational accuracy. Interacts with and stabilizes bases of the 16S rRNA that are involved in tRNA selection in the A site and with the mRNA backbone. Located at the interface of the 30S and 50S subunits, it traverses the body of the 30S subunit contacting proteins on the other side and probably holding the rRNA structure together. The combined cluster of proteins S8, S12 and S17 appears to hold together the shoulder and platform of the 30S subunit. The sequence is that of Small ribosomal subunit protein uS12 from Azorhizobium caulinodans (strain ATCC 43989 / DSM 5975 / JCM 20966 / LMG 6465 / NBRC 14845 / NCIMB 13405 / ORS 571).